Here is a 360-residue protein sequence, read N- to C-terminus: Aminomethyltransferase (360 aa).

Belongs to the GcvT family. The glycine cleavage system is composed of four proteins: P, T, L and H.

The catalysed reaction is N(6)-[(R)-S(8)-aminomethyldihydrolipoyl]-L-lysyl-[protein] + (6S)-5,6,7,8-tetrahydrofolate = N(6)-[(R)-dihydrolipoyl]-L-lysyl-[protein] + (6R)-5,10-methylene-5,6,7,8-tetrahydrofolate + NH4(+). In terms of biological role, the glycine cleavage system catalyzes the degradation of glycine. The polypeptide is Aminomethyltransferase (Exiguobacterium sibiricum (strain DSM 17290 / CCUG 55495 / CIP 109462 / JCM 13490 / 255-15)).